The primary structure comprises 252 residues: Large ribosomal subunit protein uL29m (252 aa).

N6-acetyllysine is present on Lys146.

This sequence belongs to the universal ribosomal protein uL29 family. As to quaternary structure, component of the mitochondrial ribosome large subunit (39S) which comprises a 16S rRNA and about 50 distinct proteins.

The protein resides in the mitochondrion. The chain is Large ribosomal subunit protein uL29m (MRPL47) from Bos taurus (Bovine).